Here is a 352-residue protein sequence, read N- to C-terminus: Cyclin-dependent kinase-like 1 (352 aa).

Residues 4–287 form the Protein kinase domain; it reads YEKIGKIGEG…CEQLLQHPYF (284 aa). Residues 10 to 18 and Lys33 contribute to the ATP site; that span reads IGEGSYGVV. Residues 45-51 carry the [NKR]KIAxRE motif; the sequence is KKIALRE. Asp126 serves as the catalytic Proton acceptor.

This sequence belongs to the protein kinase superfamily. CMGC Ser/Thr protein kinase family. CDC2/CDKX subfamily.

It is found in the cytoplasm. The protein resides in the nucleus. The catalysed reaction is L-seryl-[protein] + ATP = O-phospho-L-seryl-[protein] + ADP + H(+). It catalyses the reaction L-threonyl-[protein] + ATP = O-phospho-L-threonyl-[protein] + ADP + H(+). The protein is Cyclin-dependent kinase-like 1 of Rattus norvegicus (Rat).